Here is a 319-residue protein sequence, read N- to C-terminus: uncharacterized protein (319 aa).

9 helical membrane-spanning segments follow: residues 11–31 (GLWAGFIAFVIAMLALDLGVF), 43–63 (ALGWSALWVSLALVFGAGVWW), 83–103 (LSVDNIFVFVVIFSALRIPAL), 108–128 (VLFWGILSALALRAIMIFAGV), 134–154 (FHWLIYVFGGFLIITGVKLFL), 195–215 (LATPLLMALLLVEASDILFAL), 220–240 (AIFAVTTDPFIVFTSNIFAIL), 260–280 (KVGLSAVLVFVGTKMAIIDFV), and 284–304 (PEVSLSVIAGLLGASIVASLI).

The protein belongs to the TerC family.

The protein localises to the cell membrane. This is an uncharacterized protein from Myxococcus xanthus.